Here is a 230-residue protein sequence, read N- to C-terminus: Uracil-DNA glycosylase (230 aa).

Asp70 serves as the catalytic Proton acceptor.

It belongs to the uracil-DNA glycosylase (UDG) superfamily. UNG family.

The protein resides in the cytoplasm. The enzyme catalyses Hydrolyzes single-stranded DNA or mismatched double-stranded DNA and polynucleotides, releasing free uracil.. In terms of biological role, excises uracil residues from the DNA which can arise as a result of misincorporation of dUMP residues by DNA polymerase or due to deamination of cytosine. This is Uracil-DNA glycosylase from Pseudomonas savastanoi pv. phaseolicola (strain 1448A / Race 6) (Pseudomonas syringae pv. phaseolicola (strain 1448A / Race 6)).